The sequence spans 469 residues: Uronate isomerase (469 aa).

The protein belongs to the metallo-dependent hydrolases superfamily. Uronate isomerase family.

The enzyme catalyses D-glucuronate = D-fructuronate. It carries out the reaction aldehydo-D-galacturonate = keto-D-tagaturonate. Its pathway is carbohydrate metabolism; pentose and glucuronate interconversion. In Edwardsiella ictaluri (strain 93-146), this protein is Uronate isomerase.